The following is a 274-amino-acid chain: Formamidopyrimidine-DNA glycosylase (274 aa).

The active-site Schiff-base intermediate with DNA is the Pro2. The active-site Proton donor is the Glu3. The Proton donor; for beta-elimination activity role is filled by Lys59. 3 residues coordinate DNA: His93, Arg112, and Lys153. An FPG-type zinc finger spans residues 238–272 (QVHTKFNKPCPNCGELIQKIKLGGRGTYFCKKCQQ). Arg262 serves as the catalytic Proton donor; for delta-elimination activity.

The protein belongs to the FPG family. As to quaternary structure, monomer. Zn(2+) serves as cofactor.

It carries out the reaction Hydrolysis of DNA containing ring-opened 7-methylguanine residues, releasing 2,6-diamino-4-hydroxy-5-(N-methyl)formamidopyrimidine.. The enzyme catalyses 2'-deoxyribonucleotide-(2'-deoxyribose 5'-phosphate)-2'-deoxyribonucleotide-DNA = a 3'-end 2'-deoxyribonucleotide-(2,3-dehydro-2,3-deoxyribose 5'-phosphate)-DNA + a 5'-end 5'-phospho-2'-deoxyribonucleoside-DNA + H(+). Its function is as follows. Involved in base excision repair of DNA damaged by oxidation or by mutagenic agents. Acts as a DNA glycosylase that recognizes and removes damaged bases. Has a preference for oxidized purines, such as 7,8-dihydro-8-oxoguanine (8-oxoG). Has AP (apurinic/apyrimidinic) lyase activity and introduces nicks in the DNA strand. Cleaves the DNA backbone by beta-delta elimination to generate a single-strand break at the site of the removed base with both 3'- and 5'-phosphates. This chain is Formamidopyrimidine-DNA glycosylase, found in Mycoplasma mobile (strain ATCC 43663 / 163K / NCTC 11711) (Mesomycoplasma mobile).